Consider the following 197-residue polypeptide: Auxin-responsive protein IAA19 (197 aa).

The short motif at 13–17 (LRLGL) is the EAR-like (transcriptional repression) element. Residues 35–47 (MNMTSSGSNSDQC) show a composition bias toward polar residues. Residues 35–67 (MNMTSSGSNSDQCESGVVSSGGDAEKVNDSPAA) are disordered. Positions 96-184 (LGYVKVSMDG…KRLRIMKRSD (89 aa)) constitute a PB1 domain.

Belongs to the Aux/IAA family. In terms of assembly, homodimers and heterodimers. Interacts with the auxin response factor ARF7.

It localises to the nucleus. Functionally, aux/IAA proteins are short-lived transcriptional factors that function as repressors of early auxin response genes at low auxin concentrations. Repression is thought to result from the interaction with auxin response factors (ARFs), proteins that bind to the auxin-responsive promoter element (AuxRE). Formation of heterodimers with ARF proteins may alter their ability to modulate early auxin response genes expression. The chain is Auxin-responsive protein IAA19 (IAA19) from Arabidopsis thaliana (Mouse-ear cress).